The sequence spans 70 residues: MTTVRLRENEPFEVALRRFKRTIEKNGLLTDLRAREFYEKPTAERKRKKAAAAKRHYKRIRSQMLPKKLY.

The protein belongs to the bacterial ribosomal protein bS21 family.

The polypeptide is Small ribosomal subunit protein bS21 (Polynucleobacter asymbioticus (strain DSM 18221 / CIP 109841 / QLW-P1DMWA-1) (Polynucleobacter necessarius subsp. asymbioticus)).